A 239-amino-acid chain; its full sequence is Ribosomal RNA small subunit methyltransferase G (239 aa).

Residues glycine 79, phenylalanine 84, 130-131 (AE), and arginine 149 each bind S-adenosyl-L-methionine. The interval 218–239 (KKTKTPKKYPRQAGTPSKKPIS) is disordered.

It belongs to the methyltransferase superfamily. RNA methyltransferase RsmG family.

Its subcellular location is the cytoplasm. Its function is as follows. Specifically methylates the N7 position of a guanine in 16S rRNA. This is Ribosomal RNA small subunit methyltransferase G from Leuconostoc mesenteroides subsp. mesenteroides (strain ATCC 8293 / DSM 20343 / BCRC 11652 / CCM 1803 / JCM 6124 / NCDO 523 / NBRC 100496 / NCIMB 8023 / NCTC 12954 / NRRL B-1118 / 37Y).